The following is an 83-amino-acid chain: Putative defensin-like protein 111 (83 aa).

The first 24 residues, 1-24 (MAITKKILLPFVLTILFVISSVHC), serve as a signal peptide directing secretion. 4 disulfide bridges follow: cysteine 40–cysteine 80, cysteine 46–cysteine 69, cysteine 54–cysteine 78, and cysteine 58–cysteine 79.

Belongs to the DEFL family.

Its subcellular location is the secreted. The sequence is that of Putative defensin-like protein 111 (LCR50) from Arabidopsis thaliana (Mouse-ear cress).